An 877-amino-acid chain; its full sequence is Putative leucine-rich repeat receptor-like serine/threonine-protein kinase At2g19230 (877 aa).

Residues 1–24 form the signal peptide; sequence MGNFNFLPLVSFASFVVVLVLVCA. Over 25–517 the chain is Extracellular; the sequence is QDQSGFVSID…RNKKTERKEY (493 aa). N-linked (GlcNAc...) asparagine glycosylation is found at N142, N233, N261, N295, N405, and N420. LRR repeat units lie at residues 439–462 and 463–484; these read PLQK…ANLP and DLTE…KLLE. Residues 518–538 traverse the membrane as a helical segment; it reads IIPSVASVTGLFFLLLALISF. The Cytoplasmic portion of the chain corresponds to 539–877; it reads WQFKKRQQSV…VDPGVLPQPR (339 aa). The 274-residue stretch at 569–842 folds into the Protein kinase domain; it reads NNFERVLGQG…QVVAELKESL (274 aa). Residues 575–583 and K596 each bind ATP; that span reads LGQGGFGKV. Phosphotyrosine is present on Y641. The active-site Proton acceptor is the D692. A Phosphoserine modification is found at S726. A phosphothreonine mark is found at T727 and T732.

This sequence belongs to the protein kinase superfamily. Ser/Thr protein kinase family.

Its subcellular location is the cell membrane. It catalyses the reaction L-seryl-[protein] + ATP = O-phospho-L-seryl-[protein] + ADP + H(+). The catalysed reaction is L-threonyl-[protein] + ATP = O-phospho-L-threonyl-[protein] + ADP + H(+). In Arabidopsis thaliana (Mouse-ear cress), this protein is Putative leucine-rich repeat receptor-like serine/threonine-protein kinase At2g19230.